Consider the following 491-residue polypeptide: NADH-quinone oxidoreductase subunit N 1 (491 aa).

The next 14 helical transmembrane spans lie at 15-35 (VLGM…VDMF), 41-61 (VLLT…ALDY), 77-97 (FGVL…LIAF), 105-125 (LSQG…LFLV), 130-150 (LVTI…LTGF), 165-185 (LLLG…IYGM), 211-231 (PILL…VSMF), 247-269 (PVTA…RFLN), 279-299 (WQLL…IVAV), 307-327 (MLAY…LAAS), 333-353 (AFTV…AVLI), 378-398 (LALA…TAGF), 416-436 (LAII…RVIV), and 459-479 (LGVI…NIFT).

This sequence belongs to the complex I subunit 2 family. As to quaternary structure, NDH-1 is composed of 14 different subunits. Subunits NuoA, H, J, K, L, M, N constitute the membrane sector of the complex.

Its subcellular location is the cell membrane. The catalysed reaction is a quinone + NADH + 5 H(+)(in) = a quinol + NAD(+) + 4 H(+)(out). Its function is as follows. NDH-1 shuttles electrons from NADH, via FMN and iron-sulfur (Fe-S) centers, to quinones in the respiratory chain. The immediate electron acceptor for the enzyme in this species is believed to be ubiquinone. Couples the redox reaction to proton translocation (for every two electrons transferred, four hydrogen ions are translocated across the cytoplasmic membrane), and thus conserves the redox energy in a proton gradient. This Herpetosiphon aurantiacus (strain ATCC 23779 / DSM 785 / 114-95) protein is NADH-quinone oxidoreductase subunit N 1.